We begin with the raw amino-acid sequence, 1655 residues long: Protein scribble homolog (1655 aa).

The tract at residues 1–818 (MLKCIPLWRC…MRVWRERMVE (818 aa)) is sufficient for targeting to adherens junction and to inhibit cell proliferation. Phosphoserine is present on serine 37. LRR repeat units follow at residues 37–58 (SLEE…FFRL), 60–81 (NLRK…VANF), 83–104 (QLVE…IKFC), 106–127 (ALEI…FTQL), 129–150 (SLAH…VGNL), 152–174 (NLVT…SFLV), 175–197 (KLEQ…GALP), 198–219 (NLRE…LGNL), 221–243 (RLVC…GGLV), 244–265 (LLTD…IGQL), 267–288 (QLSI…IGDC), 290–312 (NLSE…GKLT), 313–334 (KLTN…IGGC), 336–357 (ALSV…LAHT), 359–381 (ELHV…THLN), and 382–402 (LKAL…QTED). A Phosphothreonine modification is found at threonine 378. 3 disordered regions span residues 417–440 (PQQP…WSDA), 459–606 (DAEE…IRKD), and 628–702 (LLQG…VSAP). A coiled-coil region spans residues 458-474 (EDAEEAAAEKRGLQRRA). Position 475 is a phosphothreonine (threonine 475). Positions 479–494 (SELKVMKRSIEGRRSE) are enriched in basic and acidic residues. Serine 504 is subject to Phosphoserine. Low complexity predominate over residues 537–555 (EGPSAEAQGGSQQEATTAG). Composition is skewed to acidic residues over residues 556–565 (GEEDAEEDYQ) and 660–694 (EEEE…EEDK). The stretch at 656–701 (RAQKEEEEEEEGSPQEEEEEEEEENRAEEEEASTEEEDKEGAVVSA) forms a coiled coil. Serine 688 carries the phosphoserine modification. Threonine 689 bears the Phosphothreonine mark. Serine 708 and serine 764 each carry phosphoserine. Positions 717-1229 (IEPARIEEEE…SLESISSIDR (513 aa)) are interaction with ARHGEF7. Residues 728 to 815 (TLTILRQTGG…AVQMRVWRER (88 aa)) enclose the PDZ 1 domain. The tract at residues 728 to 1194 (TLTILRQTGG…TVLVCDGFEA (467 aa)) is required for interaction with VIM. Phosphothreonine is present on threonine 826. A disordered region spans residues 827–853 (PLRPEDDYSPRERRGGGLRLPLLPPES). The span at 829-841 (RPEDDYSPRERRG) shows a compositional bias: basic and acidic residues. A phosphoserine mark is found at serine 835, serine 853, serine 875, and serine 939. 3 consecutive PDZ domains span residues 862 to 950 (VACL…EREA), 1004 to 1093 (EIRL…RRDP), and 1100 to 1194 (ELCI…GFEA). The interval 1105–1117 (KAPGERLGISIRG) is interaction with tick-borne encephalitis virus RNA-directed RNA polymerase NS5. Phosphoserine is present on residues serine 1140, serine 1220, serine 1223, serine 1226, serine 1232, serine 1276, serine 1279, serine 1295, serine 1298, serine 1306, and serine 1309. Basic and acidic residues predominate over residues 1227–1242 (IDRELSPEGPGKEKEL). The segment at 1227–1246 (IDRELSPEGPGKEKELPGQT) is disordered. The interval 1277 to 1489 (AGSVQRVPSG…APERALSPAE (213 aa)) is disordered. Residues 1302–1311 (QQPPSPPSPD) are compositionally biased toward pro residues. Threonine 1342 carries the phosphothreonine modification. Serine 1348 is subject to Phosphoserine. A compositionally biased stretch (basic and acidic residues) spans 1353-1365 (SFRERQKYFELEV). Serine 1378 is modified (phosphoserine). Residues 1379–1419 (LVGADDLRKMQEEEARKLQQKRAQMLREAAEAGAEARLALD) adopt a coiled-coil conformation. A compositionally biased stretch (basic and acidic residues) spans 1383–1395 (DDLRKMQEEEARK). A compositionally biased stretch (low complexity) spans 1409-1421 (EAGAEARLALDGE). Acidic residues predominate over residues 1422–1432 (TLGEEEQEDEQ). 3 positions are modified to phosphoserine: serine 1437, serine 1445, and serine 1448. Basic and acidic residues predominate over residues 1461–1472 (AKAERRHQERLR). Phosphoserine is present on residues serine 1475, serine 1486, and serine 1508. A disordered region spans residues 1520-1568 (LSRSQEGRGTRGPLERLAEAPSPAPTPSPTPVEDLGPQTSTSPGRLPLS). Positions 1524-1537 (QEGRGTRGPLERLA) are enriched in basic and acidic residues. Serine 1541 is modified (phosphoserine). Threonine 1545 is subject to Phosphothreonine. Phosphoserine occurs at positions 1547, 1561, and 1591. The interval 1622–1655 (GRPSPGAVGPEDVALCSSRRPVRPGRRGLGPVPS) is disordered.

Belongs to the LAP (LRR and PDZ) protein family. Interacts with UBE3A. Interacts with PAK1 and PAK2. Interacts (via PDZ domains) with VANGL2. Interacts (via PDZ domains) with LPP and TRIP6; the interaction is direct. Interacts (via PDZ domains) with TJP2. Interacts (via PDZ domains) with APC; may mediate APC targeting to adherens junctions of epithelial cells. Interacts (via PDZ domains) with TSHR; regulates TSHR trafficking and function. Interacts with ARHGEF7 and GIT1; interacts directly with ARHGEF7. Interacts with CTNNB1. Interacts with MAPK12. Interacts (via PDZ domains 1 and 3) with MCC. Interacts with DLG5. Interacts with STK4/MST1 and LATS1 in the presence of DLG5. Interacts (via PDZ domain 3) with CRTAM (via PDZ-binding motif); the interaction promotes CRTAM and SCRIB polarization in a subset of CD4+ T-cells. Interacts with YES1, when YES1 is in a closed conformation; the interaction facilitates YES1 autophosphorylation. Interacts (via PDZ domains) with VIM; the interaction protects SCRIB from proteasomal degradation and facilitates SCRIB localization to intermediate filaments, the interaction is reduced by cell contact inhibition. As to quaternary structure, (Microbial infection) Interacts (via fourth PDZ domain) with tick-borne encephalitis virus RNA-directed RNA polymerase NS5; this interaction targets viral NS5 to the cell membrane periphery and nucleus and prevents STAT1 phosphorylation, and thus, the activation of the JAK-STAT signaling pathway. Interacts with HPV E6. Interacts with influenza A virus protein NS1; the interaction results in the translocation of SCRIB from the cell membrane to perinuclear puncta. In terms of processing, ubiquitinated; targeted for UBE3A-dependent multiubiquitination in the presence of high-risk HPV E6 proteins and degraded. Post-translationally, palmitoylated. Could be depalmitoylated by LYPLA1 and/or LYPLA2. Palmitoylation of SCRIB by ZDHHC7 is required for its localization to cell-cell junctions, function in the establishement of epithelial cell polarity and the regulation of downstream signaling pathways important for epithelial cell differentiation. In terms of tissue distribution, expressed in kidney, skeletal muscles, liver, lung, breast, intestine, placenta and skin mainly in epithelial cells (at protein level).

It localises to the cell membrane. It is found in the cell junction. The protein localises to the adherens junction. Its subcellular location is the cell projection. The protein resides in the lamellipodium. It localises to the cytoplasm. It is found in the postsynapse. The protein localises to the presynapse. Scaffold protein involved in different aspects of polarized cell differentiation regulating epithelial and neuronal morphogenesis and T-cell polarization. Via its interaction with CRTAM, required for the late phase polarization of a subset of CD4+ T-cells, which in turn regulates TCR-mediated proliferation and IFNG and IL22 production. Plays a role in cell directional movement, cell orientation, cell sheet organization and Golgi complex polarization at the cell migration front. Promotes epithelial cell layer barrier function via maintaining cell-cell adhesion. Most probably functions in the establishment of apico-basal cell polarity. May function in cell proliferation regulating progression from G1 to S phase and as a positive regulator of apoptosis for instance during acinar morphogenesis of the mammary epithelium. May regulate cell invasion via MAPK-mediated cell migration and adhesion. May play a role in exocytosis and in the targeting of synaptic vesicles to synapses. Functions as an activator of Rac GTPase activity. This Homo sapiens (Human) protein is Protein scribble homolog.